Reading from the N-terminus, the 328-residue chain is uncharacterized protein (328 aa).

This is an uncharacterized protein from Saccharomyces cerevisiae (strain ATCC 204508 / S288c) (Baker's yeast).